A 172-amino-acid polypeptide reads, in one-letter code: Inorganic pyrophosphatase (172 aa).

Substrate is bound by residues lysine 26, arginine 40, and tyrosine 52. Positions 62, 67, and 99 each coordinate Mg(2+). Tyrosine 138 contacts substrate.

This sequence belongs to the PPase family. As to quaternary structure, homohexamer. Requires Mg(2+) as cofactor.

The protein resides in the cytoplasm. It catalyses the reaction diphosphate + H2O = 2 phosphate + H(+). In terms of biological role, catalyzes the hydrolysis of inorganic pyrophosphate (PPi) forming two phosphate ions. The chain is Inorganic pyrophosphatase from Saccharolobus solfataricus (strain ATCC 35092 / DSM 1617 / JCM 11322 / P2) (Sulfolobus solfataricus).